A 332-amino-acid chain; its full sequence is Malate dehydrogenase (332 aa).

NAD(+)-binding positions include 16–17, Asp-43, and Gly-90; that span reads QI. Residue Arg-99 coordinates oxaloacetate. Positions 113 and 132 each coordinate NAD(+). Residues Asn-132, Arg-163, His-188, and Ser-243 each coordinate oxaloacetate. His-188 acts as the Proton acceptor in catalysis.

The protein belongs to the LDH/MDH superfamily. MDH type 2 family. As to quaternary structure, homodimer.

The protein resides in the cytoplasm. The catalysed reaction is (S)-malate + NAD(+) = oxaloacetate + NADH + H(+). Catalyzes the reduction of the carbonyl group of oxalacetic acid. No activity with pulegone. The chain is Malate dehydrogenase (MD1) from Nicotiana tabacum (Common tobacco).